Here is a 147-residue protein sequence, read N- to C-terminus: Ubiquitin-conjugating enzyme E2 4 (147 aa).

The 147-residue stretch at 1-147 (MSLKRINKEL…AKEWTKKYAV (147 aa)) folds into the UBC core domain. Cysteine 85 functions as the Glycyl thioester intermediate in the catalytic mechanism.

The protein belongs to the ubiquitin-conjugating enzyme family.

It carries out the reaction S-ubiquitinyl-[E1 ubiquitin-activating enzyme]-L-cysteine + [E2 ubiquitin-conjugating enzyme]-L-cysteine = [E1 ubiquitin-activating enzyme]-L-cysteine + S-ubiquitinyl-[E2 ubiquitin-conjugating enzyme]-L-cysteine.. It participates in protein modification; protein ubiquitination. Functionally, E2 ubiquitin-conjugating enzyme that catalyzes the covalent attachment of ubiquitin to other proteins. Mediates the selective degradation of short-lived and abnormal proteins. Mediates ubiquitination of PEX5. The polypeptide is Ubiquitin-conjugating enzyme E2 4 (UBC4) (Candida albicans (Yeast)).